Consider the following 107-residue polypeptide: MGDSQSDEPEGDIAVQTAPPELKRPPLYAVVLLNDDYTPMDFVIEILQQYFALNLDQATQVMLTVHYEGKGVAGVYPRDIAETKANQVNNYARSQGHPLLCQIEPKD.

Belongs to the ClpS family. Binds to the N-terminal domain of the chaperone ClpA.

In terms of biological role, involved in the modulation of the specificity of the ClpAP-mediated ATP-dependent protein degradation. This is ATP-dependent Clp protease adapter protein ClpS from Acinetobacter baylyi (strain ATCC 33305 / BD413 / ADP1).